A 462-amino-acid polypeptide reads, in one-letter code: Chitinase-like mite allergen Der f 18.0101 (462 aa).

The first 25 residues, 1-25 (MTRFSLTVLAVLAACFGSNIRPNVA), serve as a signal peptide directing secretion. The 350-residue stretch at 29–378 (PKTVCYYESW…HAIQSNYYHG (350 aa)) folds into the GH18 domain. A disulfide bridge connects residues cysteine 33 and cysteine 58. N-linked (GlcNAc...) asparagine glycosylation is present at asparagine 338. Residues 404 to 462 (VFHCHEEGFFRDKTYCATYYECKKGDFGLEKTVHHCANHLQAFDEVSRTCIDHTKIPGC) form the Chitin-binding type-2 domain. Cysteine 439 and cysteine 453 are joined by a disulfide.

Belongs to the glycosyl hydrolase 18 family. Chitinase class II subfamily. In terms of tissue distribution, expressed in the upper digestive tract. Staining is observed in the ventriculus, and in very rare individuals, also in the intestine or esophagus. No expression in fecal pellets neither inside the rectum nor defecated outside of the body.

It is found in the secreted. Its function is as follows. Probably a non-catalytic chitinase-like protein, which binds to insoluble chitin and enhances the activity of the catalytic chitinases. Has weak chitin-binding activity. This Dermatophagoides farinae (American house dust mite) protein is Chitinase-like mite allergen Der f 18.0101.